The sequence spans 131 residues: Amicyanin (131 aa).

A signal peptide spans 1-26; it reads MISATKIRSCLAACVLAAFGATGALA. The 105-residue stretch at 27–131 folds into the Plastocyanin-like domain; that stretch reads DKATIPSESP…PFMRGKVVVE (105 aa). Cu cation-binding residues include His-79, Cys-118, His-121, and Met-124.

Cu cation serves as cofactor.

Its subcellular location is the periplasm. The protein operates within one-carbon metabolism; methylamine degradation. Functionally, primary acceptor of electrons from methylamine dehydrogenase. Passes those electrons on either a soluble cytochrome c or to pseudoazurin. The protein is Amicyanin (mauC) of Paracoccus denitrificans.